Reading from the N-terminus, the 157-residue chain is MYARLIAEKLLNHKLTIATAESVTGGLLSSSLTDIAGASRFFKGAIVAYSNELKKSLLNVKQSTLINHGAVSRYCVREMALGLMQKLNVDIAVACSGVAGPDALENQAVGSLFFCVIVANKAYDFETKLPAGSRNELRQLFVQKILQTVEHILSEIS.

This sequence belongs to the CinA family.

This is Protein MG115 homolog from Mycoplasma pneumoniae (strain ATCC 29342 / M129 / Subtype 1) (Mycoplasmoides pneumoniae).